The following is a 277-amino-acid chain: Shikimate dehydrogenase (NADP(+)) (277 aa).

Shikimate-binding positions include 15–17 and Thr-62; that span reads SLS. Lys-66 (proton acceptor) is an active-site residue. Positions 87 and 102 each coordinate shikimate. Residues 127–131, 151–156, and Ile-219 contribute to the NADP(+) site; these read GAGGA and NRTVDK. Tyr-221 serves as a coordination point for shikimate. Residue Gly-242 participates in NADP(+) binding.

This sequence belongs to the shikimate dehydrogenase family. In terms of assembly, homodimer.

The catalysed reaction is shikimate + NADP(+) = 3-dehydroshikimate + NADPH + H(+). The protein operates within metabolic intermediate biosynthesis; chorismate biosynthesis; chorismate from D-erythrose 4-phosphate and phosphoenolpyruvate: step 4/7. Involved in the biosynthesis of the chorismate, which leads to the biosynthesis of aromatic amino acids. Catalyzes the reversible NADPH linked reduction of 3-dehydroshikimate (DHSA) to yield shikimate (SA). The polypeptide is Shikimate dehydrogenase (NADP(+)) (Bacillus cereus (strain G9842)).